The chain runs to 98 residues: Small ribosomal subunit protein bTHXm (98 aa).

The N-terminal 35 residues, 1–35 (MAAMQWCGAMTRRIMMTQRTSAALNCSARYSSLSP), are a transit peptide targeting the mitochondrion. The interval 52 to 71 (DKKTKKGKRFKGSYGNSRGK) is disordered. Over residues 53-62 (KKTKKGKRFK) the composition is skewed to basic residues.

It belongs to the bacterial ribosomal protein bTHX family. Component of the mitochondrial ribosome small subunit.

It localises to the mitochondrion. This is Small ribosomal subunit protein bTHXm from Arabidopsis thaliana (Mouse-ear cress).